Reading from the N-terminus, the 166-residue chain is NAD(P)H-quinone oxidoreductase subunit I, chloroplastic (166 aa).

4Fe-4S ferredoxin-type domains follow at residues Gly55–Lys84 and Leu95–Glu124. Residues Cys64, Cys67, Cys70, Cys74, Cys104, Cys107, Cys110, and Cys114 each coordinate [4Fe-4S] cluster.

It belongs to the complex I 23 kDa subunit family. In terms of assembly, NDH is composed of at least 16 different subunits, 5 of which are encoded in the nucleus. It depends on [4Fe-4S] cluster as a cofactor.

Its subcellular location is the plastid. The protein resides in the chloroplast thylakoid membrane. It catalyses the reaction a plastoquinone + NADH + (n+1) H(+)(in) = a plastoquinol + NAD(+) + n H(+)(out). The catalysed reaction is a plastoquinone + NADPH + (n+1) H(+)(in) = a plastoquinol + NADP(+) + n H(+)(out). In terms of biological role, NDH shuttles electrons from NAD(P)H:plastoquinone, via FMN and iron-sulfur (Fe-S) centers, to quinones in the photosynthetic chain and possibly in a chloroplast respiratory chain. The immediate electron acceptor for the enzyme in this species is believed to be plastoquinone. Couples the redox reaction to proton translocation, and thus conserves the redox energy in a proton gradient. This Picradeniopsis absinthifolia (Hairyseed bahia) protein is NAD(P)H-quinone oxidoreductase subunit I, chloroplastic.